The following is a 433-amino-acid chain: Type I acyl-CoA thioesterase mpaH' (433 aa).

Positions 58-246 are abhydrolase domain; that stretch reads HGVGLPKELY…IKALFGTTAD (189 aa). Val-60 contributes to the substrate binding site. The Nucleophile role is filled by Ser-139. Phe-140 contacts substrate. Catalysis depends on residues Asp-163 and His-365.

The protein belongs to the AB hydrolase superfamily. MpaH hydrolase family. Homodimer.

Its subcellular location is the peroxisome matrix. It carries out the reaction mycophenolyl-CoA + H2O = mycophenolate + CoA + H(+). It functions in the pathway secondary metabolite biosynthesis; terpenoid biosynthesis. Type I acyl-CoA thioesterase; part of the gene cluster that mediates the biosynthesis of mycophenolic acid (MPA), the first isolated antibiotic natural product in the world obtained from a culture of Penicillium brevicompactum in 1893. MpaH' acts as a peroxisomal acyl-CoA hydrolase that converts MPA-CoA into the final product MPA. The first step of the pathway is the synthesis of 5-methylorsellinic acid (5MOA) by the cytosolic polyketide synthase mpaC. 5MOA is then converted to the phthalide compound 5,7-dihydroxy-4,6-dimethylphthalide (DHMP) by the endoplasmic reticulum-bound cytochrome P450 monooxygenase mpaDE. MpaDE first catalyzes hydroxylation of 5-MOA to 4,6-dihydroxy-2-(hydroxymethyl)-3-methylbenzoic acid (DHMB). MpaDE then acts as a lactone synthase that catalyzes the ring closure to convert DHMB into DHMP. The next step is the prenylation of DHMP by the Golgi apparatus-associated prenyltransferase mpaA to yield farnesyl-DHMP (FDHMP). The ER-bound oxygenase mpaB then mediates the oxidative cleavage the C19-C20 double bond in FDHMP to yield FDHMP-3C via a mycophenolic aldehyde intermediate. The O-methyltransferase mpaG catalyzes the methylation of FDHMP-3C to yield MFDHMP-3C. After the cytosolic methylation of FDHMP-3C, MFDHMP-3C enters into peroxisomes probably via free diffusion due to its low molecular weight. Upon a peroxisomal CoA ligation reaction, catalyzed by a beta-oxidation component enzyme acyl-CoA ligase ACL891, MFDHMP-3C-CoA would then be restricted to peroxisomes for the following beta-oxidation pathway steps. The peroxisomal beta-oxidation machinery than converts MFDHMP-3C-CoA into MPA_CoA, via a beta-oxidation chain-shortening process. Finally mpaH acts as a peroxisomal acyl-CoA hydrolase with high substrate specificity toward MPA-CoA to release the final product MPA. The protein is Type I acyl-CoA thioesterase mpaH' of Penicillium brevicompactum.